Reading from the N-terminus, the 171-residue chain is uncharacterized protein (171 aa).

Belongs to the IUNH family.

This is an uncharacterized protein from Acidianus ambivalens (Desulfurolobus ambivalens).